We begin with the raw amino-acid sequence, 163 residues long: Ribosome maturation factor RimM (163 aa).

The PRC barrel domain occupies 92–162; sequence EDEFYVADLV…AGRAVVRPPE (71 aa).

It belongs to the RimM family. In terms of assembly, binds ribosomal protein uS19.

It localises to the cytoplasm. Its function is as follows. An accessory protein needed during the final step in the assembly of 30S ribosomal subunit, possibly for assembly of the head region. Essential for efficient processing of 16S rRNA. May be needed both before and after RbfA during the maturation of 16S rRNA. It has affinity for free ribosomal 30S subunits but not for 70S ribosomes. The polypeptide is Ribosome maturation factor RimM (Rubrobacter xylanophilus (strain DSM 9941 / JCM 11954 / NBRC 16129 / PRD-1)).